We begin with the raw amino-acid sequence, 206 residues long: Small ribosomal subunit protein uS4 (206 aa).

Positions 96–156 (CRLDNVVYRM…EKSLNQLRIV (61 aa)) constitute an S4 RNA-binding domain.

It belongs to the universal ribosomal protein uS4 family. Part of the 30S ribosomal subunit. Contacts protein S5. The interaction surface between S4 and S5 is involved in control of translational fidelity.

Its function is as follows. One of the primary rRNA binding proteins, it binds directly to 16S rRNA where it nucleates assembly of the body of the 30S subunit. Functionally, with S5 and S12 plays an important role in translational accuracy. The chain is Small ribosomal subunit protein uS4 from Pseudomonas entomophila (strain L48).